The sequence spans 119 residues: MSTTRGVSSSSAAAALALLLLFALCFFSFHSAAAARAVPRDEHQENGGVKAVAAVAADQLVLQLEGDTGNGDEVSELMGAAEEEAAACEEGKNNDECVQRRLLSDAHLDYIYTQHKNKP.

The signal sequence occupies residues 1–34 (MSTTRGVSSSSAAAALALLLLFALCFFSFHSAAA). Residues 35 to 109 (ARAVPRDEHQ…RRLLSDAHLD (75 aa)) constitute a propeptide that is removed on maturation. Sulfotyrosine occurs at positions 110 and 112. A propeptide spanning residues 115 to 119 (HKNKP) is cleaved from the precursor.

This sequence belongs to the phytosulfokine family. Sulfation is important for activity and for the binding to a putative membrane receptor. Post-translationally, PSK-alpha is produced by endopeptidase digestion. PSK-beta is produced from PSK-alpha by exopeptidase digestion.

It localises to the secreted. Promotes plant cell differentiation, organogenesis and somatic embryogenesis as well as cell proliferation. This is Phytosulfokines 2 (PSK2) from Oryza sativa subsp. indica (Rice).